Consider the following 1510-residue polypeptide: Chromosome partition protein MukB (1510 aa).

75-82 (GGNGAGKS) is a binding site for ATP. A coiled-coil region spans residues 346 to 706 (QHRLVDLSRE…LDEQISRLSQ (361 aa)). Residues 707-824 (PDGSEDPRLN…EIPLFGCAAR (118 aa)) are flexible hinge. 2 coiled-coil regions span residues 825-1154 (EKRL…AAKV) and 1248-1304 (IDAI…LQNI).

The protein belongs to the SMC family. MukB subfamily. In terms of assembly, homodimerization via its hinge domain. Binds to DNA via its C-terminal region. Interacts, and probably forms a ternary complex, with MukE and MukF via its C-terminal region. The complex formation is stimulated by calcium or magnesium. Interacts with tubulin-related protein FtsZ.

Its subcellular location is the cytoplasm. The protein resides in the nucleoid. In terms of biological role, plays a central role in chromosome condensation, segregation and cell cycle progression. Functions as a homodimer, which is essential for chromosome partition. Involved in negative DNA supercoiling in vivo, and by this means organize and compact chromosomes. May achieve or facilitate chromosome segregation by condensation DNA from both sides of a centrally located replisome during cell division. The sequence is that of Chromosome partition protein MukB from Haemophilus influenzae (strain ATCC 51907 / DSM 11121 / KW20 / Rd).